The following is a 136-amino-acid chain: Putative pre-16S rRNA nuclease (136 aa).

Belongs to the YqgF nuclease family.

The protein resides in the cytoplasm. In terms of biological role, could be a nuclease involved in processing of the 5'-end of pre-16S rRNA. This Francisella tularensis subsp. mediasiatica (strain FSC147) protein is Putative pre-16S rRNA nuclease.